The chain runs to 570 residues: 4-coumarate--CoA ligase 4 (570 aa).

ATP-binding residues include serine 218, serine 219, glycine 220, threonine 221, threonine 222, and lysine 226. Tyrosine 268 lines the (E)-4-coumaroyl-AMP pocket. Arginine 289 lines the CoA pocket. Positions 291–360 are SBD1; sequence ELNLVMELIQ…LKFPNAIFGQ (70 aa). Residues alanine 338, glutamine 360, glycine 361, and threonine 365 each coordinate (E)-4-coumaroyl-AMP. Positions 360, 361, 365, 448, and 463 each coordinate ATP. The tract at residues 361-427 is SBD2; that stretch reads GYGMTESGTV…VRGHQLMKGY (67 aa). Positions 465 and 469 each coordinate (E)-4-coumaroyl-AMP. Lysine 471 and glycine 472 together coordinate CoA. Lysine 554 serves as a coordination point for ATP.

It belongs to the ATP-dependent AMP-binding enzyme family. Requires Mg(2+) as cofactor.

It catalyses the reaction (E)-sinapate + ATP + CoA = (E)-sinapoyl-CoA + AMP + diphosphate. It carries out the reaction (E)-4-coumarate + ATP + CoA = (E)-4-coumaroyl-CoA + AMP + diphosphate. The enzyme catalyses (E)-caffeate + ATP + CoA = (E)-caffeoyl-CoA + AMP + diphosphate. The catalysed reaction is (E)-ferulate + ATP + CoA = (E)-feruloyl-CoA + AMP + diphosphate. It catalyses the reaction (E)-sinapate + ATP + H(+) = (E)-sinapoyl-AMP + diphosphate. It carries out the reaction (E)-sinapoyl-AMP + CoA = (E)-sinapoyl-CoA + AMP + H(+). The enzyme catalyses (E)-4-coumarate + ATP + H(+) = (E)-4-coumaroyl-AMP + diphosphate. The catalysed reaction is (E)-4-coumaroyl-AMP + CoA = (E)-4-coumaroyl-CoA + AMP + H(+). It catalyses the reaction (E)-caffeate + ATP + H(+) = (E)-caffeoyl-AMP + diphosphate. It carries out the reaction (E)-caffeoyl-AMP + CoA = (E)-caffeoyl-CoA + AMP + H(+). The enzyme catalyses (E)-ferulate + ATP + H(+) = (E)-feruloyl-AMP + diphosphate. The catalysed reaction is (E)-feruloyl-AMP + CoA = (E)-feruloyl-CoA + AMP + H(+). Its pathway is phytoalexin biosynthesis; 3,4',5-trihydroxystilbene biosynthesis; 3,4',5-trihydroxystilbene from trans-4-coumarate: step 1/2. Its function is as follows. Produces CoA thioesters of a variety of hydroxy- and methoxy-substituted cinnamic acids, which are used to synthesize several phenylpropanoid-derived compounds, including anthocyanins, flavonoids, isoflavonoids, coumarins, lignin, suberin and wall-bound phenolics. Follows a two-step reaction mechanism, wherein the carboxylate substrate first undergoes adenylation by ATP, followed by a thioesterification in the presence of CoA to yield the final CoA thioesters. This chain is 4-coumarate--CoA ligase 4, found in Arabidopsis thaliana (Mouse-ear cress).